Here is a 366-residue protein sequence, read N- to C-terminus: MREDTGDFRRLFLSGTPMMDVRAPLEFARGAFPGTVNLPLMDDEERHQVGLCYAEKGQHAAIELGHRLVWGALKATRIAQWADFARAHPDGYLYCFRGGLRSQIVQQWLRDEAGIDYPRVTGGYKAMRGFLIDVIEQAAAKQDFLVLGGLTGTGKTDVIAEVPAAVDLEGLACHRGSAFGRRAQPQPQQIDFENSLAIDVLQRAEAGYRALVVEDEGRFIGGRDLPKVLWQRMQASPMVWLEASFEERVERVLRDYVLGLAAEHIEQLGPVAGFEAYATRLRDAMAAISPRLGSERYGRLSALLEQALTSQSERGETAPHRAWIEVLLRDYYDPMYAYQEEKRAARVVFRGDRAAVTDWLRERSAR.

A Rhodanese domain is found at 12–136; that stretch reads FLSGTPMMDV…MRGFLIDVIE (125 aa). Residue C95 is the S-selanylcysteine intermediate of the active site.

This sequence belongs to the SelU family. Monomer.

It catalyses the reaction 5-methylaminomethyl-2-thiouridine(34) in tRNA + selenophosphate + (2E)-geranyl diphosphate + H2O + H(+) = 5-methylaminomethyl-2-selenouridine(34) in tRNA + (2E)-thiogeraniol + phosphate + diphosphate. It carries out the reaction 5-methylaminomethyl-2-thiouridine(34) in tRNA + (2E)-geranyl diphosphate = 5-methylaminomethyl-S-(2E)-geranyl-thiouridine(34) in tRNA + diphosphate. The enzyme catalyses 5-methylaminomethyl-S-(2E)-geranyl-thiouridine(34) in tRNA + selenophosphate + H(+) = 5-methylaminomethyl-2-(Se-phospho)selenouridine(34) in tRNA + (2E)-thiogeraniol. The catalysed reaction is 5-methylaminomethyl-2-(Se-phospho)selenouridine(34) in tRNA + H2O = 5-methylaminomethyl-2-selenouridine(34) in tRNA + phosphate. In terms of biological role, involved in the post-transcriptional modification of the uridine at the wobble position (U34) of tRNA(Lys), tRNA(Glu) and tRNA(Gln). Catalyzes the conversion of 2-thiouridine (S2U-RNA) to 2-selenouridine (Se2U-RNA). Acts in a two-step process involving geranylation of 2-thiouridine (S2U) to S-geranyl-2-thiouridine (geS2U) and subsequent selenation of the latter derivative to 2-selenouridine (Se2U) in the tRNA chain. The sequence is that of tRNA 2-selenouridine synthase from Cupriavidus pinatubonensis (strain JMP 134 / LMG 1197) (Cupriavidus necator (strain JMP 134)).